The primary structure comprises 98 residues: Integration host factor subunit alpha (98 aa).

The tract at residues Leu-54–Ser-74 is disordered.

This sequence belongs to the bacterial histone-like protein family. Heterodimer of an alpha and a beta chain.

Functionally, this protein is one of the two subunits of integration host factor, a specific DNA-binding protein that functions in genetic recombination as well as in transcriptional and translational control. The sequence is that of Integration host factor subunit alpha from Actinobacillus succinogenes (strain ATCC 55618 / DSM 22257 / CCUG 43843 / 130Z).